The following is a 268-amino-acid chain: Glutamine amidotransferase-like class 1 domain-containing protein 3, mitochondrial (268 aa).

A mitochondrion-targeting transit peptide spans 1-41; that stretch reads MAAVRVLVASRLAAASAFTSLSPGGRTPSQRAALHLSVPRP. N6-acetyllysine is present on residues lysine 151, lysine 157, and lysine 164. Lysine 203 carries the N6-acetyllysine; alternate modification. Position 203 is an N6-succinyllysine; alternate (lysine 203). An N6-acetyllysine modification is found at lysine 219. Residues lysine 223 and lysine 233 each carry the N6-acetyllysine; alternate modification. Residues lysine 223 and lysine 233 each carry the N6-succinyllysine; alternate modification.

Belongs to the GATD3 family.

The protein localises to the mitochondrion. This is Glutamine amidotransferase-like class 1 domain-containing protein 3, mitochondrial from Homo sapiens (Human).